The sequence spans 351 residues: DNA polymerase IV (351 aa).

One can recognise a UmuC domain in the interval 4–185; it reads IIHVDMDCFY…LPLGKIPGVG (182 aa). D8 and D103 together coordinate Mg(2+). E104 is an active-site residue.

This sequence belongs to the DNA polymerase type-Y family. Monomer. Mg(2+) serves as cofactor.

It is found in the cytoplasm. The enzyme catalyses DNA(n) + a 2'-deoxyribonucleoside 5'-triphosphate = DNA(n+1) + diphosphate. Poorly processive, error-prone DNA polymerase involved in untargeted mutagenesis. Copies undamaged DNA at stalled replication forks, which arise in vivo from mismatched or misaligned primer ends. These misaligned primers can be extended by PolIV. Exhibits no 3'-5' exonuclease (proofreading) activity. May be involved in translesional synthesis, in conjunction with the beta clamp from PolIII. The polypeptide is DNA polymerase IV (Citrobacter koseri (strain ATCC BAA-895 / CDC 4225-83 / SGSC4696)).